A 375-amino-acid chain; its full sequence is DNA replication and repair protein RecF (375 aa).

30–37 (GNNAQGKS) contributes to the ATP binding site.

Belongs to the RecF family.

It is found in the cytoplasm. Its function is as follows. The RecF protein is involved in DNA metabolism; it is required for DNA replication and normal SOS inducibility. RecF binds preferentially to single-stranded, linear DNA. It also seems to bind ATP. This chain is DNA replication and repair protein RecF, found in Microcystis aeruginosa (strain NIES-843 / IAM M-2473).